Consider the following 25-residue polypeptide: Ocellatin-1 (25 aa).

Valine 25 is modified (valine amide).

As to expression, expressed by the skin dorsal glands.

It localises to the secreted. Its function is as follows. Has hemolytic activity against human erythrocytes and antibacterial activity against the Gram-negative bacterium E.coli. The protein is Ocellatin-1 of Leptodactylus ocellatus (Argus frog).